Consider the following 489-residue polypeptide: Probable cytosol aminopeptidase (489 aa).

The Mn(2+) site is built by K260 and D265. K272 is an active-site residue. Mn(2+) contacts are provided by D283, D342, and E344. R346 is an active-site residue.

It belongs to the peptidase M17 family. Requires Mn(2+) as cofactor.

Its subcellular location is the cytoplasm. It catalyses the reaction Release of an N-terminal amino acid, Xaa-|-Yaa-, in which Xaa is preferably Leu, but may be other amino acids including Pro although not Arg or Lys, and Yaa may be Pro. Amino acid amides and methyl esters are also readily hydrolyzed, but rates on arylamides are exceedingly low.. The catalysed reaction is Release of an N-terminal amino acid, preferentially leucine, but not glutamic or aspartic acids.. In terms of biological role, presumably involved in the processing and regular turnover of intracellular proteins. Catalyzes the removal of unsubstituted N-terminal amino acids from various peptides. The polypeptide is Probable cytosol aminopeptidase (Alcanivorax borkumensis (strain ATCC 700651 / DSM 11573 / NCIMB 13689 / SK2)).